The sequence spans 459 residues: Probable D-serine dehydratase (459 aa).

At Lys-119 the chain carries N6-(pyridoxal phosphate)lysine.

The protein belongs to the serine/threonine dehydratase family. DsdA subfamily. The cofactor is pyridoxal 5'-phosphate.

The enzyme catalyses D-serine = pyruvate + NH4(+). This Geobacillus stearothermophilus (Bacillus stearothermophilus) protein is Probable D-serine dehydratase.